Reading from the N-terminus, the 568-residue chain is Protein NDNF (568 aa).

The signal sequence occupies residues 1–19 (MVLLHWCLLWLLFPLSSRT). 2 consecutive Fibronectin type-III domains span residues 261 to 331 (NSGK…VGTF) and 445 to 564 (PSLP…VVKT). N322 carries an N-linked (GlcNAc...) asparagine glycan.

Binds heparin and chondroitin sulfate. In terms of processing, O-glycosylated; contains heparan sulfate and chondroitin sulfate. N-glycosylated. Expressed in neurons along the gonadotropin-releasing hormone (GnRH) expressing neurons migratory route.

The protein resides in the secreted. Functionally, secretory protein that plays a role in various cellular processes. Acts as a chemorepellent acting on gonadotropin-releasing hormone (GnRH) expressing neurons regulating their migration to the hypothalamus. Also promotes neuron migration, growth and survival as well as neurite outgrowth and is involved in the development of the olfactory system. May also act through the regulation of growth factors activity and downstream signaling. Also regulates extracellular matrix assembly and cell adhesiveness. Promotes endothelial cell survival, vessel formation and plays an important role in the process of revascularization through NOS3-dependent mechanisms. The polypeptide is Protein NDNF (NDNF) (Homo sapiens (Human)).